The primary structure comprises 306 residues: Ribosomal protein L11 methyltransferase (306 aa).

Residues Thr139, Gly173, Asp195, and Asn242 each coordinate S-adenosyl-L-methionine.

Belongs to the methyltransferase superfamily. PrmA family.

The protein resides in the cytoplasm. It catalyses the reaction L-lysyl-[protein] + 3 S-adenosyl-L-methionine = N(6),N(6),N(6)-trimethyl-L-lysyl-[protein] + 3 S-adenosyl-L-homocysteine + 3 H(+). In terms of biological role, methylates ribosomal protein L11. This chain is Ribosomal protein L11 methyltransferase, found in Trichormus variabilis (strain ATCC 29413 / PCC 7937) (Anabaena variabilis).